Reading from the N-terminus, the 20-residue chain is Hongotoxin-5 (20 aa).

This sequence belongs to the short scorpion toxin superfamily. Potassium channel inhibitor family. Alpha-KTx 02 subfamily. Expressed by the venom gland.

Its subcellular location is the secreted. Potent selective inhibitor of Kv1/KCNA voltage-gated potassium channels. The sequence is that of Hongotoxin-5 from Centruroides limbatus (Bark scorpion).